A 170-amino-acid polypeptide reads, in one-letter code: MLPNTPRRAVYAGSFDPPTLGHLWMIRQAQSMFDELIVAIGINPDKRSTYTVAERQDMLCDITKMFPNVRTDVFENRFLVHYAREVDAGFIVRGIRSASDYEYERSMRHINSDLAPEISTVFLMPPREIAEVSSTMVKGLVGPEGWTETIHRYVPQAVYEKILAEHQHEN.

Residue serine 14 coordinates substrate. ATP contacts are provided by residues 14-15 and histidine 22; that span reads SF. 3 residues coordinate substrate: lysine 46, leucine 79, and arginine 93. Residues 94-96, glutamate 104, and 129-135 contribute to the ATP site; these read GIR and IAEVSST.

This sequence belongs to the bacterial CoaD family. As to quaternary structure, homohexamer. Mg(2+) serves as cofactor.

It localises to the cytoplasm. The catalysed reaction is (R)-4'-phosphopantetheine + ATP + H(+) = 3'-dephospho-CoA + diphosphate. The protein operates within cofactor biosynthesis; coenzyme A biosynthesis; CoA from (R)-pantothenate: step 4/5. Reversibly transfers an adenylyl group from ATP to 4'-phosphopantetheine, yielding dephospho-CoA (dPCoA) and pyrophosphate. This Neisseria meningitidis serogroup C (strain 053442) protein is Phosphopantetheine adenylyltransferase.